Consider the following 74-residue polypeptide: Small ribosomal subunit protein uS15 (74 aa).

The protein belongs to the universal ribosomal protein uS15 family. In terms of assembly, part of the 30S ribosomal subunit. Forms a bridge to the 50S subunit in the 70S ribosome, contacting the 23S rRNA.

In terms of biological role, one of the primary rRNA binding proteins, it binds directly to 16S rRNA where it helps nucleate assembly of the platform of the 30S subunit by binding and bridging several RNA helices of the 16S rRNA. Its function is as follows. Forms an intersubunit bridge (bridge B4) with the 23S rRNA of the 50S subunit in the ribosome. The chain is Small ribosomal subunit protein uS15 from Aster yellows witches'-broom phytoplasma (strain AYWB).